The sequence spans 395 residues: Elongation factor Tu (395 aa).

Residues 10-204 (KSHVNVGTLG…AVDEYIPTPE (195 aa)) form the tr-type G domain. Residues 19-26 (GHVDHGKT) are G1. 19-26 (GHVDHGKT) contributes to the GTP binding site. A Mg(2+)-binding site is contributed by Thr-26. Residues 60–64 (GITIS) are G2. The interval 81–84 (DCPG) is G3. GTP-binding positions include 81 to 85 (DCPGH) and 136 to 139 (NKTD). Positions 136–139 (NKTD) are G4. Positions 174–176 (SAL) are G5.

The protein belongs to the TRAFAC class translation factor GTPase superfamily. Classic translation factor GTPase family. EF-Tu/EF-1A subfamily. As to quaternary structure, monomer.

Its subcellular location is the cytoplasm. The enzyme catalyses GTP + H2O = GDP + phosphate + H(+). Functionally, GTP hydrolase that promotes the GTP-dependent binding of aminoacyl-tRNA to the A-site of ribosomes during protein biosynthesis. The sequence is that of Elongation factor Tu from Oceanobacillus iheyensis (strain DSM 14371 / CIP 107618 / JCM 11309 / KCTC 3954 / HTE831).